A 335-amino-acid polypeptide reads, in one-letter code: 4-hydroxythreonine-4-phosphate dehydrogenase (335 aa).

Substrate is bound by residues His-135 and Thr-136. 3 residues coordinate a divalent metal cation: His-165, His-210, and His-265. Substrate-binding residues include Lys-273, Asn-282, and Arg-291.

The protein belongs to the PdxA family. In terms of assembly, homodimer. Requires Zn(2+) as cofactor. Mg(2+) serves as cofactor. The cofactor is Co(2+).

Its subcellular location is the cytoplasm. The catalysed reaction is 4-(phosphooxy)-L-threonine + NAD(+) = 3-amino-2-oxopropyl phosphate + CO2 + NADH. It participates in cofactor biosynthesis; pyridoxine 5'-phosphate biosynthesis; pyridoxine 5'-phosphate from D-erythrose 4-phosphate: step 4/5. Functionally, catalyzes the NAD(P)-dependent oxidation of 4-(phosphooxy)-L-threonine (HTP) into 2-amino-3-oxo-4-(phosphooxy)butyric acid which spontaneously decarboxylates to form 3-amino-2-oxopropyl phosphate (AHAP). In Saccharophagus degradans (strain 2-40 / ATCC 43961 / DSM 17024), this protein is 4-hydroxythreonine-4-phosphate dehydrogenase.